Consider the following 633-residue polypeptide: Putative serine/threonine-protein kinase L232 (633 aa).

The Protein kinase domain maps to 10–314; that stretch reads YTIVDKLSEG…QSRKLFYEIL (305 aa). ATP is bound by residues 16 to 24 and Lys39; that span reads LSEGTYGIV. Catalysis depends on Asp133, which acts as the Proton acceptor.

This sequence belongs to the protein kinase superfamily. Ser/Thr protein kinase family.

It carries out the reaction L-seryl-[protein] + ATP = O-phospho-L-seryl-[protein] + ADP + H(+). The enzyme catalyses L-threonyl-[protein] + ATP = O-phospho-L-threonyl-[protein] + ADP + H(+). The polypeptide is Putative serine/threonine-protein kinase L232 (Acanthamoeba polyphaga mimivirus (APMV)).